We begin with the raw amino-acid sequence, 270 residues long: Putative [LysW]-aminoadipate/[LysW]-glutamate kinase (270 aa).

Residues 42–43, arginine 69, and asparagine 177 contribute to the substrate site; that span reads GG.

Belongs to the acetylglutamate kinase family. LysZ subfamily.

It is found in the cytoplasm. The catalysed reaction is [amino-group carrier protein]-C-terminal-N-(1,4-dicarboxybutan-1-yl)-L-glutamine + ATP = [amino-group carrier protein]-C-terminal-N-(1-carboxy-5-phosphooxy-5-oxopentan-1-yl)-L-glutamine + ADP. The enzyme catalyses [amino-group carrier protein]-C-terminal-gamma-(L-glutamyl)-L-glutamate + ATP = [amino-group carrier protein]-C-terminal-gamma-(5-phospho-L-glutamyl)-L-glutamate + ADP. The protein operates within amino-acid biosynthesis; L-lysine biosynthesis via AAA pathway; L-lysine from L-alpha-aminoadipate (Thermus route): step 2/5. It functions in the pathway amino-acid biosynthesis; L-arginine biosynthesis. In terms of biological role, involved in both the arginine and lysine biosynthetic pathways. Phosphorylates the LysW-bound precursors glutamate (for arginine biosynthesis), respectively alpha-aminoadipate (for lysine biosynthesis). The polypeptide is Putative [LysW]-aminoadipate/[LysW]-glutamate kinase (Aeropyrum pernix (strain ATCC 700893 / DSM 11879 / JCM 9820 / NBRC 100138 / K1)).